Here is a 356-residue protein sequence, read N- to C-terminus: MRVTDFSFELPESLIAHYPMPERSSCRLLSLDGPTGALTHGTFTDLLDKLNPGDLLVFNNTRVIPARLFGRKASGGKIEVLVERMLDDKRILAHIRASKAPKPGAELLLGDDERINATMTARHGALFEVEFNDQRSVLDILNSIGHMPLPPYIDRPDEDADRELYQTVYSEKPGAVAAPTAGLHFDEPLLEKLRAKGVEMAFVTLHVGAGTFQPVRVDTIEDHIMHSEYAEVPQDVVDAVLAAKARGNRVIAVGTTSVRSLESAAQAAKNDLIEPFFDDTQIFIYPGFQYKVVDALVTNFHLPESTLIMLVSAFAGYQHTMNAYKAAVEEKYRFFSYGDAMFITYNPQAINERVGE.

It belongs to the QueA family. In terms of assembly, monomer.

It localises to the cytoplasm. The catalysed reaction is 7-aminomethyl-7-carbaguanosine(34) in tRNA + S-adenosyl-L-methionine = epoxyqueuosine(34) in tRNA + adenine + L-methionine + 2 H(+). Its pathway is tRNA modification; tRNA-queuosine biosynthesis. Its function is as follows. Transfers and isomerizes the ribose moiety from AdoMet to the 7-aminomethyl group of 7-deazaguanine (preQ1-tRNA) to give epoxyqueuosine (oQ-tRNA). This chain is S-adenosylmethionine:tRNA ribosyltransferase-isomerase, found in Escherichia coli O127:H6 (strain E2348/69 / EPEC).